The following is a 329-amino-acid chain: MQFIDQAIIDVKAGSGGDGISAFRREKYVPAGGPAGGDGGQGGNVVLEADDNLQTLLDFKFQKLISAENGQRGGPNKCTGASGKDTVLKVPCGTEVRHLSTNIILGDLTNKGQQLIVAFGGKGGFGNARYLSNSNRAPEKFTEGKVGEEWSLQLELKLLAEVGIIGLPNAGKSTLISVLSSARPKIADYPFTTLIPNLGVVRRPSGDGTVFADIPGLISGASKGIGLGHDFLRHIERTKVLLHLIDSASTDPINDFKTINEELTSYGHGLISRPRIFVLNKKELLNEHEIKKLLNKIEKLTMKKVHIISAVTKFGLDDLLSSIWYELGY.

The 159-residue stretch at 1–159 folds into the Obg domain; it reads MQFIDQAIID…WSLQLELKLL (159 aa). In terms of domain architecture, OBG-type G spans 160-328; that stretch reads AEVGIIGLPN…LLSSIWYELG (169 aa). Residues 166–173, 191–195, 213–216, 280–283, and 309–311 contribute to the ATP site; these read GLPNAGKS, FTTLI, DIPG, NKKE, and SAV. Ser-173 and Thr-193 together coordinate Mg(2+).

Belongs to the TRAFAC class OBG-HflX-like GTPase superfamily. OBG GTPase family. As to quaternary structure, monomer. Requires Mg(2+) as cofactor.

It localises to the cytoplasm. In terms of biological role, an essential GTPase which binds GTP, GDP and possibly (p)ppGpp with moderate affinity, with high nucleotide exchange rates and a fairly low GTP hydrolysis rate. Plays a role in control of the cell cycle, stress response, ribosome biogenesis and in those bacteria that undergo differentiation, in morphogenesis control. The chain is GTPase Obg from Prochlorococcus marinus (strain NATL1A).